A 317-amino-acid polypeptide reads, in one-letter code: Olfactory receptor 5K16 (317 aa).

The Extracellular portion of the chain corresponds to 1 to 28; that stretch reads MEKTNHSLTTQFILVGFSDHPDLKTPLF. An N-linked (GlcNAc...) asparagine glycan is attached at Asn-5. A helical transmembrane segment spans residues 29-49; the sequence is LLFSVIYLVTMVGNLGLVAVI. The Cytoplasmic segment spans residues 50-56; it reads YLEPRLH. Residues 57 to 77 traverse the membrane as a helical segment; it reads TPMYIFLGNLALMDSCCSCAI. Residues 78–93 are Extracellular-facing; sequence TPKILENFFSVDRRIS. Residues 94–114 form a helical membrane-spanning segment; sequence LYECMAQFYFLCLAETADCFL. A disulfide bridge connects residues Cys-97 and Cys-189. The Cytoplasmic portion of the chain corresponds to 115-144; the sequence is LAAMAYDRYVAICNPLQYHSMMSKKLSIQM. The chain crosses the membrane as a helical span at residues 145–165; that stretch reads SIGTFITSNLHSLIHVGCLLR. The Extracellular portion of the chain corresponds to 166 to 198; the sequence is LTFCKSNRIDHFFCDILPLYRLSCTDPFINELM. The chain crosses the membrane as a helical span at residues 199-219; sequence IYIFSMPIQVFTITTVLVSYF. The Cytoplasmic portion of the chain corresponds to 220 to 239; sequence CILLTIFKMKSKDGRGKAFS. The helical transmembrane segment at 240 to 259 threads the bilayer; that stretch reads TCASHFFSVSIFYVCLLMYI. Residues 260–268 are Extracellular-facing; that stretch reads RPFDEGNKD. A helical membrane pass occupies residues 269-289; it reads IPVAVFYTIIIPLLNPFIYSL. The Cytoplasmic segment spans residues 290–317; it reads RNKEVVNAVKKVMKTHSIFKNASASMAR.

It belongs to the G-protein coupled receptor 1 family.

It localises to the cell membrane. Potential odorant receptor. The chain is Olfactory receptor 5K16 from Mus musculus (Mouse).